We begin with the raw amino-acid sequence, 335 residues long: Gibberellin 2-beta-dioxygenase 3 (335 aa).

In terms of domain architecture, Fe2OG dioxygenase spans 175-278 (ESDSCLRMNH…RISMIYFAGP (104 aa)). Fe cation contacts are provided by H202, D204, and H259. R269 is a catalytic residue.

Belongs to the iron/ascorbate-dependent oxidoreductase family. GA2OX subfamily. The cofactor is Fe(2+). As to expression, not expressed in the apex.

The enzyme catalyses gibberellin A1 + 2-oxoglutarate + O2 = gibberellin A8 + succinate + CO2. It participates in plant hormone biosynthesis; gibberellin biosynthesis. Functionally, catalyzes the 2-beta-hydroxylation of several biologically active gibberellins, leading to the homeostatic regulation of their endogenous level. Catabolism of gibberellins (GAs) plays a central role in plant development. Converts GA9/GA20 to GA51/GA29 and GA4/GA1 to GA34/GA8. The chain is Gibberellin 2-beta-dioxygenase 3 (GA2OX3) from Arabidopsis thaliana (Mouse-ear cress).